The primary structure comprises 64 residues: Large ribosomal subunit protein bL32 (64 aa).

The segment at 1–64 (MAVQQNRKTR…APKHGDETEE (64 aa)) is disordered. Basic residues predominate over residues 7–16 (RKTRSKRGMR).

It belongs to the bacterial ribosomal protein bL32 family.

This Methylococcus capsulatus (strain ATCC 33009 / NCIMB 11132 / Bath) protein is Large ribosomal subunit protein bL32.